A 286-amino-acid chain; its full sequence is 4-diphosphocytidyl-2-C-methyl-D-erythritol kinase (286 aa).

K13 is a catalytic residue. 96–106 (PMGGGIGGGSS) serves as a coordination point for ATP. Residue D138 is part of the active site.

This sequence belongs to the GHMP kinase family. IspE subfamily.

The catalysed reaction is 4-CDP-2-C-methyl-D-erythritol + ATP = 4-CDP-2-C-methyl-D-erythritol 2-phosphate + ADP + H(+). The protein operates within isoprenoid biosynthesis; isopentenyl diphosphate biosynthesis via DXP pathway; isopentenyl diphosphate from 1-deoxy-D-xylulose 5-phosphate: step 3/6. Catalyzes the phosphorylation of the position 2 hydroxy group of 4-diphosphocytidyl-2C-methyl-D-erythritol. This Pseudoalteromonas atlantica (strain T6c / ATCC BAA-1087) protein is 4-diphosphocytidyl-2-C-methyl-D-erythritol kinase.